A 357-amino-acid chain; its full sequence is UPF0283 membrane protein BSUIS_A1077 (357 aa).

The segment at 1–36 (MSDKTPRKPTAFRLEQPARVSAASEQEEPRHPRAVK) is disordered. Over residues 27 to 36 (EEPRHPRAVK) the composition is skewed to basic and acidic residues. Transmembrane regions (helical) follow at residues 78–98 (ILFG…TEDL) and 109–129 (LGWT…AIIL).

The protein belongs to the UPF0283 family.

It is found in the cell inner membrane. The protein is UPF0283 membrane protein BSUIS_A1077 of Brucella suis (strain ATCC 23445 / NCTC 10510).